The chain runs to 351 residues: Dihydroorotate dehydrogenase (quinone) (351 aa).

Residues 67–71 and threonine 91 contribute to the FMN site; that span reads AGFDK. Lysine 71 provides a ligand contact to substrate. 116-120 provides a ligand contact to substrate; sequence NAMGF. Asparagine 145 and asparagine 178 together coordinate FMN. Asparagine 178 contacts substrate. The active-site Nucleophile is the serine 181. Asparagine 183 is a binding site for substrate. The FMN site is built by lysine 214 and threonine 242. 243–244 lines the substrate pocket; it reads NT. FMN is bound by residues glycine 262, glycine 291, and 312 to 313; that span reads YS.

This sequence belongs to the dihydroorotate dehydrogenase family. Type 2 subfamily. In terms of assembly, monomer. Requires FMN as cofactor.

It is found in the cell membrane. It carries out the reaction (S)-dihydroorotate + a quinone = orotate + a quinol. The protein operates within pyrimidine metabolism; UMP biosynthesis via de novo pathway; orotate from (S)-dihydroorotate (quinone route): step 1/1. Its function is as follows. Catalyzes the conversion of dihydroorotate to orotate with quinone as electron acceptor. In Helicobacter pylori (strain ATCC 700392 / 26695) (Campylobacter pylori), this protein is Dihydroorotate dehydrogenase (quinone) (pyrD).